Consider the following 348-residue polypeptide: Zinc-type alcohol dehydrogenase-like protein C2E1P3.01 (348 aa).

The protein belongs to the zinc-containing alcohol dehydrogenase family. Quinone oxidoreductase subfamily.

The protein localises to the mitochondrion. This chain is Zinc-type alcohol dehydrogenase-like protein C2E1P3.01, found in Schizosaccharomyces pombe (strain 972 / ATCC 24843) (Fission yeast).